Here is a 223-residue protein sequence, read N- to C-terminus: Thiamine-phosphate synthase (223 aa).

4-amino-2-methyl-5-(diphosphooxymethyl)pyrimidine is bound by residues 42–46 (QLRDK) and asparagine 83. Residues aspartate 84 and aspartate 103 each contribute to the Mg(2+) site. Serine 122 serves as a coordination point for 4-amino-2-methyl-5-(diphosphooxymethyl)pyrimidine. 148 to 150 (TPT) serves as a coordination point for 2-[(2R,5Z)-2-carboxy-4-methylthiazol-5(2H)-ylidene]ethyl phosphate. Lysine 151 lines the 4-amino-2-methyl-5-(diphosphooxymethyl)pyrimidine pocket. Glycine 179 contacts 2-[(2R,5Z)-2-carboxy-4-methylthiazol-5(2H)-ylidene]ethyl phosphate.

Belongs to the thiamine-phosphate synthase family. Mg(2+) serves as cofactor.

The enzyme catalyses 2-[(2R,5Z)-2-carboxy-4-methylthiazol-5(2H)-ylidene]ethyl phosphate + 4-amino-2-methyl-5-(diphosphooxymethyl)pyrimidine + 2 H(+) = thiamine phosphate + CO2 + diphosphate. It carries out the reaction 2-(2-carboxy-4-methylthiazol-5-yl)ethyl phosphate + 4-amino-2-methyl-5-(diphosphooxymethyl)pyrimidine + 2 H(+) = thiamine phosphate + CO2 + diphosphate. The catalysed reaction is 4-methyl-5-(2-phosphooxyethyl)-thiazole + 4-amino-2-methyl-5-(diphosphooxymethyl)pyrimidine + H(+) = thiamine phosphate + diphosphate. It functions in the pathway cofactor biosynthesis; thiamine diphosphate biosynthesis; thiamine phosphate from 4-amino-2-methyl-5-diphosphomethylpyrimidine and 4-methyl-5-(2-phosphoethyl)-thiazole: step 1/1. Functionally, condenses 4-methyl-5-(beta-hydroxyethyl)thiazole monophosphate (THZ-P) and 2-methyl-4-amino-5-hydroxymethyl pyrimidine pyrophosphate (HMP-PP) to form thiamine monophosphate (TMP). This Mycolicibacterium paratuberculosis (strain ATCC BAA-968 / K-10) (Mycobacterium paratuberculosis) protein is Thiamine-phosphate synthase.